The sequence spans 144 residues: Large ribosomal subunit protein uL15 (144 aa).

Residues 1 to 14 are compositionally biased toward basic residues; sequence MVVRREKKSRKMRG. Residues 1 to 35 form a disordered region; it reads MVVRREKKSRKMRGSRTMGWGIRGQHRDRGSQGGR.

This sequence belongs to the universal ribosomal protein uL15 family. Part of the 50S ribosomal subunit.

Functionally, binds to the 23S rRNA. This Saccharolobus solfataricus (strain ATCC 35092 / DSM 1617 / JCM 11322 / P2) (Sulfolobus solfataricus) protein is Large ribosomal subunit protein uL15.